The sequence spans 360 residues: Ribosomal RNA large subunit methyltransferase M (360 aa).

Residues serine 187, 220–223, aspartate 239, aspartate 259, and aspartate 276 each bind S-adenosyl-L-methionine; that span reads CPGG. The active-site Proton acceptor is the lysine 305.

This sequence belongs to the class I-like SAM-binding methyltransferase superfamily. RNA methyltransferase RlmE family. RlmM subfamily. In terms of assembly, monomer.

The protein resides in the cytoplasm. It catalyses the reaction cytidine(2498) in 23S rRNA + S-adenosyl-L-methionine = 2'-O-methylcytidine(2498) in 23S rRNA + S-adenosyl-L-homocysteine + H(+). Functionally, catalyzes the 2'-O-methylation at nucleotide C2498 in 23S rRNA. This chain is Ribosomal RNA large subunit methyltransferase M, found in Shewanella sediminis (strain HAW-EB3).